The primary structure comprises 218 residues: Calcineurin B-like protein 5 (218 aa).

4 EF-hand domains span residues 35–69 (EVEA…FRNK), 70–105 (KTNL…FHPD), 107–142 (PEEQ…LLDE), and 151–186 (AVEM…NPYV).

This sequence belongs to the calcineurin regulatory subunit family. Homodimer. As to expression, expressed at low levels in roots, shoots, culms, leaves and young spikelets.

Functionally, acts as a calcium sensor. CBL proteins interact with CIPK serine-threonine protein kinases. Binding of a CBL protein to the regulatory NAF domain of a CIPK protein lead to the activation of the kinase in a calcium-dependent manner. The sequence is that of Calcineurin B-like protein 5 (CBL5) from Oryza sativa subsp. japonica (Rice).